Consider the following 337-residue polypeptide: 1-aminocyclopropane-1-carboxylate deaminase (337 aa).

At Lys-50 the chain carries N6-(pyridoxal phosphate)lysine. The active-site Nucleophile is Ser-77.

This sequence belongs to the ACC deaminase/D-cysteine desulfhydrase family. Homotrimer. Pyridoxal 5'-phosphate is required as a cofactor.

The enzyme catalyses 1-aminocyclopropane-1-carboxylate + H2O = 2-oxobutanoate + NH4(+). Functionally, catalyzes a cyclopropane ring-opening reaction, the irreversible conversion of 1-aminocyclopropane-1-carboxylate (ACC) to ammonia and alpha-ketobutyrate. Allows growth on ACC as a nitrogen source. The chain is 1-aminocyclopropane-1-carboxylate deaminase from Rhizobium rhizogenes (strain K84 / ATCC BAA-868) (Agrobacterium radiobacter).